The following is an 811-amino-acid chain: Potassium transporter 27 (811 aa).

Topologically, residues 1-64 are cytoplasmic; sequence MGDDVLGRGS…QEESWARTLK (64 aa). A helical transmembrane segment spans residues 65 to 85; sequence LAFQCVGILYGDIGTSPLFVY. Residues 86–102 lie on the Extracellular side of the membrane; sequence SSTFKDGVRHPDDLLGA. A helical transmembrane segment spans residues 103–123; sequence LSLIIYSFALFTIVKYVFIAL. Topologically, residues 124-188 are cytoplasmic; the sequence is RANDDGDGGT…ELLETNRAVK (65 aa). A helical membrane pass occupies residues 189-209; it reads IWLFLLTILATAMVISDAVLT. At 210–226 the chain is on the extracellular side; the sequence is PAISVLSAVGGLKEKAP. The helical transmembrane segment at 227-247 threads the bilayer; the sequence is NLTTDEIVWITVATLVVLFAI. Residues 248–254 are Cytoplasmic-facing; it reads QRFGTDK. A helical transmembrane segment spans residues 255 to 275; that stretch reads IGYLFAPIILLWLLLIGCVGI. Over 276-310 the chain is Extracellular; sequence YNTIKFDTGVLRAFNLKYIIDYFRRNKKDGWISLS. A helical transmembrane segment spans residues 311–331; that stretch reads GILLCFTGTEALFSDLGYFSI. Residues 332–335 are Cytoplasmic-facing; it reads RSIQ. The chain crosses the membrane as a helical span at residues 336 to 356; it reads LSFSFGLVPSVLLAYIGQAAY. Residues 357–375 lie on the Extracellular side of the membrane; that stretch reads LREHPEHIANTFYRSTPNV. Residues 376–396 traverse the membrane as a helical segment; that stretch reads MFWPTFILAVAASIIGSQAMI. Topologically, residues 397–434 are cytoplasmic; the sequence is SCAFATISHLQTLNCFPRVKILHTSRQYSGQLYIPEVN. A helical membrane pass occupies residues 435 to 455; the sequence is FLLCVGACLVTIGFKTTVIIG. Over 456–459 the chain is Extracellular; sequence EAHA. A helical membrane pass occupies residues 460 to 480; that stretch reads ICVVFVMIITTLLLTIVMLLV. The Cytoplasmic segment spans residues 481-482; the sequence is WK. A helical transmembrane segment spans residues 483–503; that stretch reads VSIWYVALFFIVFMSSESIYL. The Extracellular segment spans residues 504–515; it reads SAVLYQFVHGEY. Residues 516 to 536 traverse the membrane as a helical segment; the sequence is VPVAMSVFLMIVMTVWHYVHV. Residues 537 to 811 are Cytoplasmic-facing; that stretch reads KRYEFELEHT…VLKVGIAYEI (275 aa).

It belongs to the HAK/KUP transporter (TC 2.A.72.3) family.

It is found in the membrane. Its function is as follows. High-affinity potassium transporter. This is Potassium transporter 27 (HAK27) from Oryza sativa subsp. japonica (Rice).